Consider the following 239-residue polypeptide: Ribonuclease 3 (239 aa).

The RNase III domain occupies 11-133 (HAAIQKKLGY…MFAAVSFDAD (123 aa)). Glu46 is a Mg(2+) binding site. Asp50 is a catalytic residue. Mg(2+) contacts are provided by Asp119 and Glu122. The 71-residue stretch at 160–230 (DGKTALQEAL…AKEALKWLEE (71 aa)) folds into the DRBM domain.

This sequence belongs to the ribonuclease III family. In terms of assembly, homodimer. It depends on Mg(2+) as a cofactor.

It localises to the cytoplasm. It carries out the reaction Endonucleolytic cleavage to 5'-phosphomonoester.. Functionally, digests double-stranded RNA. Involved in the processing of primary rRNA transcript to yield the immediate precursors to the large and small rRNAs (23S and 16S). Also processes some mRNAs, and tRNAs when they are encoded in the rRNA operon. Its function is as follows. CRISPR (clustered regularly interspaced short palindromic repeat) is an adaptive immune system that provides protection against mobile genetic elements (viruses, transposable elements and conjugative plasmids). CRISPR clusters contain spacers, sequences complementary to antecedent mobile elements, and target invading nucleic acids. CRISPR clusters are transcribed and processed into CRISPR RNA (crRNA). In this organism endogenous ribonuclease 3 and Cas9 are required for correct coprocessing of pre-crRNA and the trans-encoded small RNA (tracrRNA). Cas9, crRNA and tracRNA are required for cleavage of invading DNA. Involved in 3'-end processing but not 5'-end processing of crRNA and tracrRNA. The sequence is that of Ribonuclease 3 from Neisseria meningitidis serogroup C (strain 8013).